Here is a 1006-residue protein sequence, read N- to C-terminus: Unconventional myosin-Id (1006 aa).

Alanine 2 bears the N-acetylalanine mark. In terms of domain architecture, Myosin motor spans 9–695 (FGKADFVLMD…TLFTLEELRA (687 aa)). 102–109 (GESGAGKT) lines the ATP pocket. Serine 200 is modified (phosphoserine). Tyrosine 536 bears the Phosphotyrosine mark. The interval 572-594 (MIALVDNLASKEPYYVRCIKPND) is actin-binding. IQ domains are found at residues 699 to 719 (IRIVLFLQKVWRGTLARMRYK) and 721 to 741 (TKAALTIIRYYRHYKVKSYIQ). The region spanning 812-1005 (GQRADLGLQR…RSGFILSVPG (194 aa)) is the TH1 domain.

It belongs to the TRAFAC class myosin-kinesin ATPase superfamily. Myosin family. Interacts (via the two IQ motifs) with calmodulin. Binds an additional calmodulin chain via a third, C-terminal region. Interacts with F-actin.

The protein resides in the cytoplasm. Its subcellular location is the perikaryon. The protein localises to the cell projection. It localises to the dendrite. It is found in the early endosome. The protein resides in the cell cortex. In terms of biological role, unconventional myosin that functions as actin-based motor protein with ATPase activity. Plays a role in endosomal protein trafficking, and especially in the transfer of cargo proteins from early to recycling endosomes. Required for normal planar cell polarity in ciliated tracheal cells, for normal rotational polarity of cilia, and for coordinated, unidirectional ciliary movement in the trachea. Required for normal, polarized cilia organization in brain ependymal epithelial cells. The sequence is that of Unconventional myosin-Id (MYO1D) from Canis lupus familiaris (Dog).